A 226-amino-acid chain; its full sequence is Ribonuclease 3 (226 aa).

Residues 7-129 (LPRLCRTLGY…IIGAVYLDAD (123 aa)) form the RNase III domain. Glutamate 42 contributes to the Mg(2+) binding site. Residue aspartate 46 is part of the active site. Aspartate 115 and glutamate 118 together coordinate Mg(2+). Glutamate 118 is an active-site residue. One can recognise a DRBM domain in the interval 156 to 226 (DAKTLLQEYL…AAQVLELLNQ (71 aa)).

The protein belongs to the ribonuclease III family. In terms of assembly, homodimer. Mg(2+) serves as cofactor.

It localises to the cytoplasm. The enzyme catalyses Endonucleolytic cleavage to 5'-phosphomonoester.. Digests double-stranded RNA. Involved in the processing of primary rRNA transcript to yield the immediate precursors to the large and small rRNAs (23S and 16S). Processes some mRNAs, and tRNAs when they are encoded in the rRNA operon. Processes pre-crRNA and tracrRNA of type II CRISPR loci if present in the organism. The sequence is that of Ribonuclease 3 from Shewanella amazonensis (strain ATCC BAA-1098 / SB2B).